The sequence spans 443 residues: MRRSPRSGSAASSHNHTPNFYSENSNSSHSATSGDSNGRRSAGPELGEPEGRRARGSSCGEPALSPGMPGGDTWAGSSRPKLAPRSHNGQTACGAATVRGGASEPSGSSVVLEEQLNLLPILDLRQEMPTPRVSKSFLSLLFQVLSMVLSLAVDGLVCVCREICSIRFLFTAVSLLSIFLAALWWGLLYLIPPLENEPTEMLTLSQYHHRVHSQGQQLQQLQAELNKLHKEVSSVRAAHSERVAKLVFQRLNEDFVRKPDYALSSVGASIDLEKTSSDYEDQNTAYFWNRLSFWNYARPPSVILEPDVFPGNCWAFEGDKGQVVIRLPGHVQLSDITLQHPPPTVAHTGGASSAPRDFAVYGLQADDETEVFLGKFIFDVQKSEIQTFHLQNDPPSAFPKVKIQILSNWGHPRFTCLYRVRAHGVRTSEWADDNATGVTGGPH.

Residues methionine 1–serine 36 are compositionally biased toward low complexity. The interval methionine 1–glycine 107 is disordered. The next 2 membrane-spanning stretches (helical) occupy residues phenylalanine 137 to valine 157 and phenylalanine 168 to leucine 188. The stretch at threonine 203–alanine 244 forms a coiled coil. Residues glycine 267–threonine 427 form the SUN domain.

In terms of assembly, self-associates. Interacts with ODF1. May associate with microtubules. Interacts with SUN3 and SYNE1; suggesting the formation of a spermatogenesis-specific LINC complex; a SUN domain-based heterotrimer of SPAG4 and SUN3 may associate with SYNE1. Interacts with SEPT12 and LMNB1; during spermatogenesis. In terms of tissue distribution, isoform 1 is testis specific and is exclusively expressed in spermatids.

The protein resides in the membrane. Its subcellular location is the cytoplasm. It localises to the cytoskeleton. It is found in the nucleus envelope. The protein localises to the nucleus inner membrane. The protein resides in the flagellum axoneme. Its function is as follows. Involved in spermatogenesis. Required for sperm head formation but not required to establish and maintain general polarity of the sperm head. Required for anchoring and organization of the manchette. Required for targeting of SUN3 and probably SYNE1 through a probable SUN1:SYNE3 LINC complex to the nuclear envelope and involved in accurate posterior sperm head localization of the complex. May anchor SUN3 the nuclear envelope. Involved in maintenance of the nuclear envelope integrity. May assist the organization and assembly of outer dense fibers (ODFs), a specific structure of the sperm tail. The protein is Sperm-associated antigen 4 protein (Spag4) of Mus musculus (Mouse).